A 46-amino-acid polypeptide reads, in one-letter code: Defensin Tk-AMP-D6 (46 aa).

Disulfide bonds link cysteine 3/cysteine 46, cysteine 14/cysteine 34, cysteine 20/cysteine 40, and cysteine 24/cysteine 42.

Its function is as follows. Plant defense peptide. The polypeptide is Defensin Tk-AMP-D6 (Triticum kiharae (Wheat)).